The following is a 335-amino-acid chain: Holliday junction branch migration complex subunit RuvB (335 aa).

The interval 1–181 is large ATPase domain (RuvB-L); the sequence is MDRIVEIEKY…FGMQFRLEFY (181 aa). Residues Leu20, Arg21, Gly62, Lys65, Thr66, Thr67, 128 to 130, Arg171, Tyr181, and Arg218 contribute to the ATP site; that span reads EDY. Thr66 lines the Mg(2+) pocket. The small ATPAse domain (RuvB-S) stretch occupies residues 182–252; it reads KDSELALILQ…RANEALNSLG (71 aa). The head domain (RuvB-H) stretch occupies residues 255-335; that stretch reads ELGFDAMDLR…LNYEKTLFEE (81 aa). DNA is bound by residues Arg309 and Arg314.

Belongs to the RuvB family. Homohexamer. Forms an RuvA(8)-RuvB(12)-Holliday junction (HJ) complex. HJ DNA is sandwiched between 2 RuvA tetramers; dsDNA enters through RuvA and exits via RuvB. An RuvB hexamer assembles on each DNA strand where it exits the tetramer. Each RuvB hexamer is contacted by two RuvA subunits (via domain III) on 2 adjacent RuvB subunits; this complex drives branch migration. In the full resolvosome a probable DNA-RuvA(4)-RuvB(12)-RuvC(2) complex forms which resolves the HJ.

It localises to the cytoplasm. It catalyses the reaction ATP + H2O = ADP + phosphate + H(+). In terms of biological role, the RuvA-RuvB-RuvC complex processes Holliday junction (HJ) DNA during genetic recombination and DNA repair, while the RuvA-RuvB complex plays an important role in the rescue of blocked DNA replication forks via replication fork reversal (RFR). RuvA specifically binds to HJ cruciform DNA, conferring on it an open structure. The RuvB hexamer acts as an ATP-dependent pump, pulling dsDNA into and through the RuvAB complex. RuvB forms 2 homohexamers on either side of HJ DNA bound by 1 or 2 RuvA tetramers; 4 subunits per hexamer contact DNA at a time. Coordinated motions by a converter formed by DNA-disengaged RuvB subunits stimulates ATP hydrolysis and nucleotide exchange. Immobilization of the converter enables RuvB to convert the ATP-contained energy into a lever motion, pulling 2 nucleotides of DNA out of the RuvA tetramer per ATP hydrolyzed, thus driving DNA branch migration. The RuvB motors rotate together with the DNA substrate, which together with the progressing nucleotide cycle form the mechanistic basis for DNA recombination by continuous HJ branch migration. Branch migration allows RuvC to scan DNA until it finds its consensus sequence, where it cleaves and resolves cruciform DNA. This chain is Holliday junction branch migration complex subunit RuvB, found in Campylobacter jejuni (strain RM1221).